Here is a 2186-residue protein sequence, read N- to C-terminus: Non-reducing polyketide synthase men2 (2186 aa).

A Starter acyltransferase (SAT) domain is found at 16–255; it reads FFGDQTVDAL…MQLPLGTPAH (240 aa). The region spanning 382-815 is the Ketosynthase family 3 (KS3) domain; it reads SNLIAVVGQS…GGNNCVLLEE (434 aa). Active-site for beta-ketoacyl synthase activity residues include Cys-554, His-690, and His-729. The 291-residue stretch at 914–1204 folds into the Malonyl-CoA:ACP transacylase (MAT) domain; it reads VFAFTGQGAQ…SSLVKSTLSA (291 aa). The segment at 1299 to 1623 is product template (PT) domain; that stretch reads TASLQQVRSE…TRRVLATVLG (325 aa). The interval 1303–1434 is N-terminal hotdog fold; it reads QQVRSEQING…CKLHFDKRGS (132 aa). A PKS/mFAS DH domain is found at 1303-1619; it reads QQVRSEQING…FQRLTRRVLA (317 aa). His-1335 acts as the Proton acceptor; for dehydratase activity in catalysis. Residues 1463–1619 form a C-terminal hotdog fold region; that stretch reads TGHRLPKSVV…FQRLTRRVLA (157 aa). The Proton donor; for dehydratase activity role is filled by Asp-1523. The Carrier 1 domain maps to 1666–1742; that stretch reads VGDEKADAAI…GLRRAISELS (77 aa). Residue Ser-1702 is modified to O-(pantetheine 4'-phosphoryl)serine. The tract at residues 1747-1785 is disordered; the sequence is GPASGSVSVSSSATTTHGMTTPSSTSSAQSSQSSQTPDG. A compositionally biased stretch (low complexity) spans 1749 to 1783; that stretch reads ASGSVSVSSSATTTHGMTTPSSTSSAQSSQSSQTP. A Carrier 2 domain is found at 1784–1861; it reads DGPGIYANAV…HVRRALGSDS (78 aa). An O-(pantetheine 4'-phosphoryl)serine modification is found at Ser-1821. A disordered region spans residues 1857–1878; that stretch reads LGSDSDGDSKPKSAPAPPAPEP. Residues 1921–2163 are thioesterase (TE) domain; sequence LFFLPDGTGY…TMPCDHLSLL (243 aa).

Pantetheine 4'-phosphate is required as a cofactor.

The protein operates within secondary metabolite biosynthesis. Non-reducing polyketide synthase; part of the gene cluster that mediates the biosynthesis of menisporopsin A, a bioactive macrocyclic polylactone. The biosynthesis of menisporopsin A is performed by a reducing (man1) and a non-reducing (men2) polyketide synthase that catalyze the formation of each menisporopsin A subunits, while the esterification and cyclolactonization activities are probably peformed by the unusual thioesterase domain of men2. First, a reduced diketide intermediate, 3-hydroxybutyryl-S-ACP is produced by men1 and transferred to men2; this is followed by a second reduced diketide which is further elongated using 3 units of malonyl-coA to form a reduced pentaketide. The cyclization of this intermediate by the PT domain forms the second subunit, 2,4-dihydroxy-6-(2-hydroxy-n-propyl)benzoyl-S-ACP. The TE domain of men2 then esterifies the secondary hydroxyl group on the side chain of the second subunit with the acyl-TE of the first subunit to form the first ester intermediate. This process occurs iteratively to form a linear tetraester intermediate. The final subunit is formed by a similar process, except that an extra malonyl-CoA is required in an additional elongation step to form a reduced hexaketide intermediate, and the carbonyl group next to the secondary hydroxyl group is reduced by a trans-acting ketoreductase. Again, the PT domain catalyzes cyclization to form the largest subunit, 2,4-dihydroxy-6-(2,4-dihydroxy-n-pentyl) benzoyl-S-ACP. Then the linear pentaester intermediate is formed. In this step, if the intermediate transfer rate is slow, intra- molecular cyclization involving the secondary hydroxyl group of the pentaester intermediate may occur to form menisporopsin B. Alternatively, transfer of the pentaester intermediate to the TE domain would allow cyclolactonization to be catalyzed by the TE to form menisporopsin A. The chain is Non-reducing polyketide synthase men2 from Menisporopsis theobromae.